The primary structure comprises 583 residues: Glycine--tRNA ligase (583 aa).

The substrate site is built by Arg100 and Glu166. ATP-binding positions include 198–200 (RNE), 208–213 (VRLREF), 328–329 (EV), and 443–446 (GTDR). 213–217 (FTIME) is a binding site for substrate. 439-443 (EPSFG) contacts substrate.

The protein belongs to the class-II aminoacyl-tRNA synthetase family.

The protein resides in the cytoplasm. It carries out the reaction tRNA(Gly) + glycine + ATP = glycyl-tRNA(Gly) + AMP + diphosphate. In terms of biological role, catalyzes the attachment of glycine to tRNA(Gly). This is Glycine--tRNA ligase from Aeropyrum pernix (strain ATCC 700893 / DSM 11879 / JCM 9820 / NBRC 100138 / K1).